Here is a 414-residue protein sequence, read N- to C-terminus: tRNA N6-adenosine threonylcarbamoyltransferase, mitochondrial (414 aa).

A mitochondrion-targeting transit peptide spans 1–29 (MLMLSKTAGAIPRPPRSNVRGFIRRFNVQ). N6-acetyllysine is present on residues Lys-74 and Lys-140. Positions 147 and 151 each coordinate a divalent metal cation. Substrate contacts are provided by residues 169–173 (LISGG) and Asp-202. Lys-203 carries the post-translational modification N6-acetyllysine. Positions 222 and 226 each coordinate substrate. N6-acetyllysine occurs at positions 230 and 299. Substrate is bound by residues 329 to 330 (SN) and Thr-357. Asp-358 contacts a divalent metal cation.

It belongs to the KAE1 / TsaD family. As to quaternary structure, monomer. Requires a divalent metal cation as cofactor.

The protein localises to the mitochondrion. It catalyses the reaction L-threonylcarbamoyladenylate + adenosine(37) in tRNA = N(6)-L-threonylcarbamoyladenosine(37) in tRNA + AMP + H(+). In terms of biological role, required for the formation of a threonylcarbamoyl group on adenosine at position 37 (t(6)A37) in mitochondrial tRNAs that read codons beginning with adenine. Probably involved in the transfer of the threonylcarbamoyl moiety of threonylcarbamoyl-AMP (TC-AMP) to the N6 group of A37. Involved in mitochondrial genome maintenance. This Rattus norvegicus (Rat) protein is tRNA N6-adenosine threonylcarbamoyltransferase, mitochondrial.